The primary structure comprises 64 residues: Cecropin-A (64 aa).

The first 22 residues, M1–A22, serve as a signal peptide directing secretion. Positions A23–P26 are cleaved as a propeptide — removed by a dipeptidylpeptidase. K63 is modified (lysine amide).

The protein belongs to the cecropin family. In terms of processing, a protein with the same sequence as cecropin A, but lacking the carboxyl blocking group, has been isolated and called cecropin C.

The protein resides in the secreted. Its function is as follows. Cecropins have lytic and antibacterial activity against several Gram-positive and Gram-negative bacteria. This Hyalophora cecropia (Cecropia moth) protein is Cecropin-A.